We begin with the raw amino-acid sequence, 342 residues long: Holliday junction branch migration complex subunit RuvB (342 aa).

A disordered region spans residues 1 to 22 (MTLKPVREVSPGSQEGEERLEQ). Residues 1–185 (MTLKPVREVS…FPIQERLGYY (185 aa)) are large ATPase domain (RuvB-L). ATP is bound by residues leucine 24, arginine 25, glycine 66, lysine 69, threonine 70, serine 71, 132–134 (EDY), arginine 175, tyrosine 185, and arginine 222. Threonine 70 is a Mg(2+) binding site. The tract at residues 186 to 256 (EPTELREIAV…IVETTLERLE (71 aa)) is small ATPAse domain (RuvB-S). The interval 259–342 (GRGLDAMDRR…RPQGKQGSLI (84 aa)) is head domain (RuvB-H). Arginine 295, arginine 314, and arginine 319 together coordinate DNA.

The protein belongs to the RuvB family. In terms of assembly, homohexamer. Forms an RuvA(8)-RuvB(12)-Holliday junction (HJ) complex. HJ DNA is sandwiched between 2 RuvA tetramers; dsDNA enters through RuvA and exits via RuvB. An RuvB hexamer assembles on each DNA strand where it exits the tetramer. Each RuvB hexamer is contacted by two RuvA subunits (via domain III) on 2 adjacent RuvB subunits; this complex drives branch migration. In the full resolvosome a probable DNA-RuvA(4)-RuvB(12)-RuvC(2) complex forms which resolves the HJ.

It localises to the cytoplasm. The catalysed reaction is ATP + H2O = ADP + phosphate + H(+). In terms of biological role, the RuvA-RuvB-RuvC complex processes Holliday junction (HJ) DNA during genetic recombination and DNA repair, while the RuvA-RuvB complex plays an important role in the rescue of blocked DNA replication forks via replication fork reversal (RFR). RuvA specifically binds to HJ cruciform DNA, conferring on it an open structure. The RuvB hexamer acts as an ATP-dependent pump, pulling dsDNA into and through the RuvAB complex. RuvB forms 2 homohexamers on either side of HJ DNA bound by 1 or 2 RuvA tetramers; 4 subunits per hexamer contact DNA at a time. Coordinated motions by a converter formed by DNA-disengaged RuvB subunits stimulates ATP hydrolysis and nucleotide exchange. Immobilization of the converter enables RuvB to convert the ATP-contained energy into a lever motion, pulling 2 nucleotides of DNA out of the RuvA tetramer per ATP hydrolyzed, thus driving DNA branch migration. The RuvB motors rotate together with the DNA substrate, which together with the progressing nucleotide cycle form the mechanistic basis for DNA recombination by continuous HJ branch migration. Branch migration allows RuvC to scan DNA until it finds its consensus sequence, where it cleaves and resolves cruciform DNA. This is Holliday junction branch migration complex subunit RuvB from Anaeromyxobacter sp. (strain Fw109-5).